We begin with the raw amino-acid sequence, 475 residues long: Adenosylhomocysteinase (475 aa).

The substrate site is built by threonine 60, aspartate 133, and glutamate 198. An NAD(+)-binding site is contributed by 199–201; sequence TTT. Substrate is bound by residues lysine 228 and aspartate 232. Residues asparagine 233, 262-267, glutamate 285, asparagine 320, 341-343, and asparagine 389 each bind NAD(+); these read GYGDVG and IGH.

The protein belongs to the adenosylhomocysteinase family. It depends on NAD(+) as a cofactor.

Its subcellular location is the cytoplasm. It catalyses the reaction S-adenosyl-L-homocysteine + H2O = L-homocysteine + adenosine. It participates in amino-acid biosynthesis; L-homocysteine biosynthesis; L-homocysteine from S-adenosyl-L-homocysteine: step 1/1. May play a key role in the regulation of the intracellular concentration of adenosylhomocysteine. This chain is Adenosylhomocysteinase, found in Syntrophotalea carbinolica (strain DSM 2380 / NBRC 103641 / GraBd1) (Pelobacter carbinolicus).